The primary structure comprises 92 residues: Small ribosomal subunit protein uS19 (92 aa).

Belongs to the universal ribosomal protein uS19 family.

Its function is as follows. Protein S19 forms a complex with S13 that binds strongly to the 16S ribosomal RNA. This is Small ribosomal subunit protein uS19 from Bacillus cereus (strain B4264).